Reading from the N-terminus, the 635-residue chain is Endo-1,4-beta-xylanase B (635 aa).

The GH10 domain maps to 1 to 337 (MNLKTAYEPY…KEAYYAVLKA (337 aa)). Catalysis depends on glutamate 150, which acts as the Proton donor. The active-site Nucleophile is the glutamate 255.

The protein belongs to the glycosyl hydrolase 10 (cellulase F) family.

The catalysed reaction is Endohydrolysis of (1-&gt;4)-beta-D-xylosidic linkages in xylans.. It functions in the pathway glycan degradation; xylan degradation. In terms of biological role, b.fibrisolvens is located in the rumen of ruminant animals, where it contributes to the animal's digestion of plant material by hydrolyzing hemicellulose with its xylanases. The polypeptide is Endo-1,4-beta-xylanase B (xynB) (Butyrivibrio fibrisolvens).